Reading from the N-terminus, the 476-residue chain is MVEPQVAPIAPMMRRIRRIHFVGIGGVGMGGIAEVLLNLGYQISGSDLRKNQLIQRLLSLGAQIRIGHDPQHVEGCDVVVVSSAIDEDNTEVSAARGRLIPVVPRAEMLAELMRFRYGIAVAGTHGKTTTTSLIAGILGEANLDPTFVIGGQVNSIGANSRLGKGEYLVAEADESDASFLLLQPLLAVITNVDADHMDAYGGDFTALKAAFLEFLHHLPFYGLAVVCLDDPVLRELLPGIGRPVLTYGTCKEADYHLRELKQTQGQTQFQVARPGKDNWLTVVLNLPGAHNALNALAAIAVAHELGIADSAIQRFLKGFSGIGRRFQCYGEIATPAGKVLLVDDYGHHPRELAATLEAIRAGWPERRLVVIFQPHRYTRTRDLFEEFIRVLSQVDVLLLLEVYPAGEAPIGGADSRALWQAIQTHGQVSPILVEDKEIIGEMLFDLLQEGDLLLTVGAGDIGALARRLSISLEGKR.

123-129 (GTHGKTT) is a binding site for ATP.

The protein belongs to the MurCDEF family.

It localises to the cytoplasm. It catalyses the reaction UDP-N-acetyl-alpha-D-muramate + L-alanine + ATP = UDP-N-acetyl-alpha-D-muramoyl-L-alanine + ADP + phosphate + H(+). It participates in cell wall biogenesis; peptidoglycan biosynthesis. Cell wall formation. The polypeptide is UDP-N-acetylmuramate--L-alanine ligase (Nitrosococcus oceani (strain ATCC 19707 / BCRC 17464 / JCM 30415 / NCIMB 11848 / C-107)).